Here is a 445-residue protein sequence, read N- to C-terminus: Proton extrusion protein PxcA (445 aa).

Transmembrane regions (helical) follow at residues 227–247 (FILL…TFLI), 322–342 (AIAN…VVAF), 369–389 (LIIL…WEVI), and 405–425 (FNFL…KYWI).

It belongs to the CemA family.

The protein localises to the cell inner membrane. Required for H(+) efflux immediately after light irradiation to form a rapid H(+) concentration gradient across the thylakoid membranes. Together with PxcL, contributes to transient H(+) uptake following dark to light transition. The chain is Proton extrusion protein PxcA from Microcystis aeruginosa (strain NIES-843 / IAM M-2473).